Consider the following 305-residue polypeptide: MALCALTRALRSLNLAPPTVAAPAPSLFPAAQMMNNGLLQQPSALMLLPCRPVLTSVALNANFVSWKSRTKYTITPVKMRKSGGRDHTGRIRVHGIGGGHKQRYRMIDFLRFRPEETKSGPFEEKVIQVRYDPCRSADIALVAGGSRKRWIIATENMQAGDTILNSNHIGRMAVAAREGDAHPLGALPVGTLINNVESEPGRGAQYIRAAGTCGVLLRKVNGTAIIQLPSKRQMQVLETCVATVGRVSNVDHNKRVIGKAGRNRWLGKRPNSGRWHRKGGWAGRKIRPLPPMKSYVKLPSASAQS.

The transit peptide at 1-60 directs the protein to the mitochondrion; the sequence is MALCALTRALRSLNLAPPTVAAPAPSLFPAAQMMNNGLLQQPSALMLLPCRPVLTSVALN. The disordered stretch occupies residues 264–283; sequence RWLGKRPNSGRWHRKGGWAG. Residues 274–283 are compositionally biased toward basic residues; that stretch reads RWHRKGGWAG.

The protein belongs to the universal ribosomal protein uL2 family. As to quaternary structure, component of the mitochondrial large ribosomal subunit (mt-LSU). Mature mammalian 55S mitochondrial ribosomes consist of a small (28S) and a large (39S) subunit. The 28S small subunit contains a 12S ribosomal RNA (12S mt-rRNA) and 30 different proteins. The 39S large subunit contains a 16S rRNA (16S mt-rRNA), a copy of mitochondrial valine transfer RNA (mt-tRNA(Val)), which plays an integral structural role, and 52 different proteins.

The protein resides in the mitochondrion. The sequence is that of Large ribosomal subunit protein uL2m (MRPL2) from Homo sapiens (Human).